The primary structure comprises 442 residues: O-acetyl-L-homoserine sulfhydrylase (442 aa).

The interval 1–32 (MVGPSGESMPRNFKPETIALHGGQEPDPTTTS) is disordered. Residue Lys216 is modified to N6-(pyridoxal phosphate)lysine.

This sequence belongs to the trans-sulfuration enzymes family. Pyridoxal 5'-phosphate is required as a cofactor.

The enzyme catalyses O-acetyl-L-homoserine + hydrogen sulfide = L-homocysteine + acetate. It functions in the pathway amino-acid biosynthesis; L-methionine biosynthesis via de novo pathway; L-homocysteine from O-acetyl-L-homoserine: step 1/1. Its activity is regulated as follows. Feedback inhibited at very high concentrations of methionine or S-adenosylmethionine. Functionally, catalyzes the conversion of O-acetyl-L-homoserine (OAH) into homocysteine in the methionine biosynthesis pathway. Can also use O-succinyl-homoserine (OSH), although at low efficiency. This chain is O-acetyl-L-homoserine sulfhydrylase, found in Leptospira meyeri.